The sequence spans 222 residues: UPF0128 protein TK2294 (222 aa).

Belongs to the UPF0128 family.

This Thermococcus kodakarensis (strain ATCC BAA-918 / JCM 12380 / KOD1) (Pyrococcus kodakaraensis (strain KOD1)) protein is UPF0128 protein TK2294.